Reading from the N-terminus, the 394-residue chain is Phosphoglycerate kinase (394 aa).

Substrate-binding positions include Asp21 to Asn23, Arg36, His59 to Arg62, Arg118, and Arg151. The residue at position 183 (Ser183) is a Phosphoserine. Lys201 serves as a coordination point for ATP. The residue at position 299 (Thr299) is a Phosphothreonine. Residues Glu323 and Gly350–Ser353 contribute to the ATP site.

This sequence belongs to the phosphoglycerate kinase family. As to quaternary structure, monomer.

The protein localises to the cytoplasm. The catalysed reaction is (2R)-3-phosphoglycerate + ATP = (2R)-3-phospho-glyceroyl phosphate + ADP. It participates in carbohydrate degradation; glycolysis; pyruvate from D-glyceraldehyde 3-phosphate: step 2/5. The sequence is that of Phosphoglycerate kinase from Bacillus pumilus (strain SAFR-032).